The chain runs to 301 residues: GTPase Era (301 aa).

The 170-residue stretch at 4–173 (KAGFVALIGK…LECISKHLIP (170 aa)) folds into the Era-type G domain. A G1 region spans residues 12–19 (GKPNAGKS). 12–19 (GKPNAGKS) contributes to the GTP binding site. Residues 38 to 42 (NATRK) form a G2 region. Positions 64–67 (DTPG) are G3. GTP contacts are provided by residues 64 to 68 (DTPGL) and 122 to 125 (SKID). The interval 122 to 125 (SKID) is G4. The G5 stretch occupies residues 152 to 154 (LSA). The KH type-2 domain occupies 204–280 (LSDEIPYESD…FLNLQVIAQK (77 aa)).

This sequence belongs to the TRAFAC class TrmE-Era-EngA-EngB-Septin-like GTPase superfamily. Era GTPase family. As to quaternary structure, monomer.

It localises to the cytoplasm. Its subcellular location is the cell inner membrane. Its function is as follows. An essential GTPase that binds both GDP and GTP, with rapid nucleotide exchange. Plays a role in 16S rRNA processing and 30S ribosomal subunit biogenesis and possibly also in cell cycle regulation and energy metabolism. In Helicobacter pylori (strain HPAG1), this protein is GTPase Era.